Consider the following 272-residue polypeptide: Ribosomal RNA small subunit methyltransferase A (272 aa).

Residues N18, L20, G45, E66, D91, and N113 each contribute to the S-adenosyl-L-methionine site.

The protein belongs to the class I-like SAM-binding methyltransferase superfamily. rRNA adenine N(6)-methyltransferase family. RsmA subfamily.

It is found in the cytoplasm. The catalysed reaction is adenosine(1518)/adenosine(1519) in 16S rRNA + 4 S-adenosyl-L-methionine = N(6)-dimethyladenosine(1518)/N(6)-dimethyladenosine(1519) in 16S rRNA + 4 S-adenosyl-L-homocysteine + 4 H(+). Functionally, specifically dimethylates two adjacent adenosines (A1518 and A1519) in the loop of a conserved hairpin near the 3'-end of 16S rRNA in the 30S particle. May play a critical role in biogenesis of 30S subunits. This Proteus mirabilis (strain HI4320) protein is Ribosomal RNA small subunit methyltransferase A.